Reading from the N-terminus, the 218-residue chain is Cytochrome b6 (218 aa).

The helical transmembrane segment at 35 to 55 (IFYCLGGITLVCFLIQFATGF) threads the bilayer. Cys38 contacts heme c. 2 residues coordinate heme b: His89 and His103. The next 3 helical transmembrane spans lie at 93–113 (ASMMVLMLILHVFRVYLTGGF), 119–139 (LTWVTGVTMAVITVSFGVTGY), and 189–209 (LHTFVMPWLLAVFMLMHFLMI). The heme b site is built by His190 and His205.

The protein belongs to the cytochrome b family. PetB subfamily. As to quaternary structure, the 4 large subunits of the cytochrome b6-f complex are cytochrome b6, subunit IV (17 kDa polypeptide, PetD), cytochrome f and the Rieske protein, while the 4 small subunits are PetG, PetL, PetM and PetN. The complex functions as a dimer. It depends on heme b as a cofactor. Heme c is required as a cofactor.

The protein resides in the cellular thylakoid membrane. Functionally, component of the cytochrome b6-f complex, which mediates electron transfer between photosystem II (PSII) and photosystem I (PSI), cyclic electron flow around PSI, and state transitions. The protein is Cytochrome b6 of Synechococcus sp. (strain CC9311).